We begin with the raw amino-acid sequence, 100 residues long: Large ribosomal subunit protein bL27 (100 aa).

Residues 1 to 9 (MIIMNLQIF) constitute a propeptide that is removed on maturation. Residues 13-32 (KGMGSSKNGRDSESKRLGTK) are disordered.

This sequence belongs to the bacterial ribosomal protein bL27 family. The N-terminus is cleaved by ribosomal processing cysteine protease Prp.

The sequence is that of Large ribosomal subunit protein bL27 from Clostridium kluyveri (strain ATCC 8527 / DSM 555 / NBRC 12016 / NCIMB 10680 / K1).